The chain runs to 356 residues: Cell division protein ZipA (356 aa).

The Periplasmic portion of the chain corresponds to 1 to 6 (MEDLQL). The chain crosses the membrane as a helical span at residues 7–27 (VLFVLGAIAIVAVLVHGFWSI). Residues 28-356 (RRQQPKSLKD…DYLHRIRANA (329 aa)) are Cytoplasmic-facing. Positions 132 to 155 (PAQPDFSLQPPVAKEQHRGPKVSR) are disordered.

Belongs to the ZipA family. In terms of assembly, interacts with FtsZ via their C-terminal domains.

It localises to the cell inner membrane. Essential cell division protein that stabilizes the FtsZ protofilaments by cross-linking them and that serves as a cytoplasmic membrane anchor for the Z ring. Also required for the recruitment to the septal ring of downstream cell division proteins. The sequence is that of Cell division protein ZipA from Shewanella baltica (strain OS185).